The sequence spans 368 residues: ATP-dependent (S)-NAD(P)H-hydrate dehydratase (368 aa).

One can recognise a YjeF C-terminal domain in the interval 3–359; that stretch reads SPSKKLLANV…DEVHGSFLDL (357 aa). Residues glycine 120 and 173–179 contribute to the (6S)-NADPHX site; that span reads NVVEFAR. ATP contacts are provided by residues 217 to 221 and 236 to 245; these read KGPHD and GGLKRSGGQG. Aspartate 246 is a (6S)-NADPHX binding site.

The protein belongs to the NnrD/CARKD family. Mg(2+) is required as a cofactor.

Its subcellular location is the cytoplasm. The catalysed reaction is (6S)-NADHX + ATP = ADP + phosphate + NADH + H(+). It catalyses the reaction (6S)-NADPHX + ATP = ADP + phosphate + NADPH + H(+). Its function is as follows. Catalyzes the dehydration of the S-form of NAD(P)HX at the expense of ATP, which is converted to ADP. Together with NAD(P)HX epimerase, which catalyzes the epimerization of the S- and R-forms, the enzyme allows the repair of both epimers of NAD(P)HX, a damaged form of NAD(P)H that is a result of enzymatic or heat-dependent hydration. This Ajellomyces capsulatus (strain G186AR / H82 / ATCC MYA-2454 / RMSCC 2432) (Darling's disease fungus) protein is ATP-dependent (S)-NAD(P)H-hydrate dehydratase.